The chain runs to 315 residues: DNA-directed RNA polymerase subunit alpha (315 aa).

Positions 1–228 are alpha N-terminal domain (alpha-NTD); the sequence is MIEIEKPKVD…EHLNLFIDLT (228 aa). Positions 245 to 315 are alpha C-terminal domain (alpha-CTD); the sequence is KEKVLEMTIE…LGLGLKPSEE (71 aa).

It belongs to the RNA polymerase alpha chain family. As to quaternary structure, homodimer. The RNAP catalytic core consists of 2 alpha, 1 beta, 1 beta' and 1 omega subunit. When a sigma factor is associated with the core the holoenzyme is formed, which can initiate transcription.

It catalyses the reaction RNA(n) + a ribonucleoside 5'-triphosphate = RNA(n+1) + diphosphate. Functionally, DNA-dependent RNA polymerase catalyzes the transcription of DNA into RNA using the four ribonucleoside triphosphates as substrates. The sequence is that of DNA-directed RNA polymerase subunit alpha from Clostridioides difficile (strain 630) (Peptoclostridium difficile).